A 154-amino-acid polypeptide reads, in one-letter code: Cysteine-rich DPF motif domain-containing protein 1 (154 aa).

It belongs to the CDPF1 family.

This is Cysteine-rich DPF motif domain-containing protein 1 from Drosophila melanogaster (Fruit fly).